Reading from the N-terminus, the 1363-residue chain is MTSTPSKSRKSSKGSKAAKAAASAPETRPLAKTPPPFRNRVVDKKGLKQLVAWAYKHHGTAATSAMADQLKDLGFRYATQAAVSISVNDLKVPEAKQNLLGQAEELITATEESYRLGVITEVERHTKVIDTWTETNERLVDAVKKNFNQNDPLNSVWMMANSGARGNMSQVRQLVGMRGLMANPQGEIIDLPIRTNFREGLTVTEYVISSYGARKGLVDTALRTADSGYLTRRLVDVAQDVIVREDDCGTSRCILVKAEDGKYGNRLVGRLTADQVVGADGEVLAERNTEIDPPLSKRFEKAAVQAVSVRSPLTCEANRSVCRKCYGWALAHNELVDLGEAVGIIAAQSIGEPGTQLTMRTFHTGGVSTAETGVVRSKLEGTVEFGAKARVRPYRTPHGVNAQQAEVDFNLTIQPSGKGKPQKIEITNGSLLFVDNGQAIDADVTVAQIAAGAVKKSVEKATKDVICDLAGQVSYDPSIQPREVTDRQGNITHKAQRLGRMWVLAGDVYNLPPNARPVVTAGATVTEGQVLAEASQASEYGGAIRLREALGDSREVQIVTTAMTLRDFKLQGESTHAGEIWNLEAKDGTRYRLNTIPGSKIGSGEVVAELNDDRFRTQTGGLVRFAPGLAIKKARSAKNGYEVNKGGTLLWIPQETHEINKDISLLMITDGQWIEAGTEVVKDIFSQTAGIVTVTQKNDILREIIVRSGSFHLCTEKKALERFQGDGVMVNPGEPIAKGISTETMVYVQTVETPEGSGLLLRPVEEYTIPNEAQLPDLGHVKQPNGPHLGLKASQRLAFKDNELVKSVEGVELLRTQLMLETFDTTPQMTVDVEAVPDKRAKTIERLQLVILESILVRRDTISDSSHGSTHTELQVEDGQSIKAGEVIATTQILCKQEGVAQMPEATADEPVRRLIVERPEDTLTISTNSQPVVTVGQRIVDGEELAAGQPSDCCGEVEKVDSTSVTLRLGRPYMVSPDSLLHVRDGDLVQRGDGLALLVFERQKTGDIVQGLPRIEELLEARRPRESAILCKKPGTVEIKQGEDDENTTVTVIEADDAVSEYPILLGRNVMVSDSQQVTAGELLTDGPINPHELLECFFEDLRSRKPLMDAAQEAIAKLQHRLVTEVQNVYKSQGVSIDDKHIEVIVRQMTSKVRVEDAGDTTLLPGELIELRQVEDTNQAMSITGGAPAEFTPVLLGITKASLNTDSFISAASFQETTRVLTEAAIEGKSDWLRGLKENVIIGRLIPAGTGFSGFEEELKAEAGPHPDILAEDPAGYRRMQNLRPDYTVDMPAAPAGDATAVLDDPSDADMEATRSRHGIEAGSNFAAFARPDADNELKEEQVVDAEAVEGLQEEGLLSDE.

The disordered stretch occupies residues 1 to 39 (MTSTPSKSRKSSKGSKAAKAAASAPETRPLAKTPPPFRN). Residues 14 to 24 (GSKAAKAAASA) show a composition bias toward low complexity. Residues C248, C315, C322, and C325 each coordinate Zn(2+).

Belongs to the RNA polymerase beta' chain family. RpoC2 subfamily. In terms of assembly, in cyanobacteria the RNAP catalytic core is composed of 2 alpha, 1 beta, 1 beta', 1 gamma and 1 omega subunit. When a sigma factor is associated with the core the holoenzyme is formed, which can initiate transcription. It depends on Zn(2+) as a cofactor.

The enzyme catalyses RNA(n) + a ribonucleoside 5'-triphosphate = RNA(n+1) + diphosphate. Functionally, DNA-dependent RNA polymerase catalyzes the transcription of DNA into RNA using the four ribonucleoside triphosphates as substrates. The polypeptide is DNA-directed RNA polymerase subunit beta' (Synechococcus sp. (strain WH7803)).